The chain runs to 1728 residues: Hybrid PKS-NRPS synthetase TAS1 (1728 aa).

The condensation (C) domain stretch occupies residues 153-499 (SPLSKAQMAL…MDPTLLDFKV (347 aa)). An adenylation (A) domain region spans residues 608–1002 (KARAASQPDL…KLHIQGRIGN (395 aa)). Positions 1141–1219 (MLRRHLTAEV…KQVDCLMGIV (79 aa)) constitute a Carrier domain. S1177 carries the post-translational modification O-(pantetheine 4'-phosphoryl)serine. The segment at 1225–1256 (LGSEPTGGSSSRSQSRRSAETSSSSTSAPSSV) is disordered. 2 stretches are compositionally biased toward low complexity: residues 1226 to 1237 (GSEPTGGSSSRS) and 1244 to 1255 (ETSSSSTSAPSS). The 453-residue stretch at 1262 to 1714 (RNLYAIVGIS…SDATWFVIST (453 aa)) folds into the Ketosynthase family 3 (KS3) domain. Catalysis depends on for beta-ketoacyl synthase activity residues C1436, H1579, and N1633.

In the N-terminal section; belongs to the NRP synthetase family. It depends on pantetheine 4'-phosphate as a cofactor.

The enzyme catalyses acetoacetyl-CoA + L-isoleucine + ATP = tenuazonic acid + AMP + diphosphate + CoA + 2 H(+). Hybrid PKS-NRPS synthetase that mediates the biosynthesis of the toxin tenuazonic acid (TeA), an inhibitor of protein biosynthesis on ribosomes by suppressing the release of new protein. TAS1 alone is sufficient for TeA synthesis via the condensation of isoleucine (Ile) with acetoacetyl-CoA by the N-terminal NRPS module and subsequent cyclization conducted by the C-terminal KS domain. The chain is Hybrid PKS-NRPS synthetase TAS1 from Pyricularia oryzae (strain 70-15 / ATCC MYA-4617 / FGSC 8958) (Rice blast fungus).